Here is a 221-residue protein sequence, read N- to C-terminus: N-(5'-phosphoribosyl)anthranilate isomerase (221 aa).

Belongs to the TrpF family.

It carries out the reaction N-(5-phospho-beta-D-ribosyl)anthranilate = 1-(2-carboxyphenylamino)-1-deoxy-D-ribulose 5-phosphate. Its pathway is amino-acid biosynthesis; L-tryptophan biosynthesis; L-tryptophan from chorismate: step 3/5. This Chlorobaculum parvum (strain DSM 263 / NCIMB 8327) (Chlorobium vibrioforme subsp. thiosulfatophilum) protein is N-(5'-phosphoribosyl)anthranilate isomerase.